Reading from the N-terminus, the 98-residue chain is Small ribosomal subunit protein eS24 (98 aa).

It belongs to the eukaryotic ribosomal protein eS24 family.

This Thermoplasma acidophilum (strain ATCC 25905 / DSM 1728 / JCM 9062 / NBRC 15155 / AMRC-C165) protein is Small ribosomal subunit protein eS24 (rps2e).